The chain runs to 367 residues: Holliday junction branch migration complex subunit RuvB (367 aa).

Residues 2 to 196 are large ATPase domain (RuvB-L); sequence TDEPLTDRPP…FGFTARLDFY (195 aa). ATP-binding positions include Leu-35, Arg-36, Gly-77, Lys-80, Thr-81, Thr-82, 143 to 145, Arg-186, Tyr-196, and Arg-233; that span reads EDF. Thr-81 is a Mg(2+) binding site. A small ATPAse domain (RuvB-S) region spans residues 197-267; that stretch reads EPADLERIVH…VAQAALAVYE (71 aa). Positions 270 to 367 are head domain (RuvB-H); the sequence is EHGLDRLDRA…IDRDAGEPTA (98 aa). DNA-binding residues include Arg-325 and Arg-330.

This sequence belongs to the RuvB family. In terms of assembly, homohexamer. Forms an RuvA(8)-RuvB(12)-Holliday junction (HJ) complex. HJ DNA is sandwiched between 2 RuvA tetramers; dsDNA enters through RuvA and exits via RuvB. An RuvB hexamer assembles on each DNA strand where it exits the tetramer. Each RuvB hexamer is contacted by two RuvA subunits (via domain III) on 2 adjacent RuvB subunits; this complex drives branch migration. In the full resolvosome a probable DNA-RuvA(4)-RuvB(12)-RuvC(2) complex forms which resolves the HJ.

Its subcellular location is the cytoplasm. The catalysed reaction is ATP + H2O = ADP + phosphate + H(+). The RuvA-RuvB-RuvC complex processes Holliday junction (HJ) DNA during genetic recombination and DNA repair, while the RuvA-RuvB complex plays an important role in the rescue of blocked DNA replication forks via replication fork reversal (RFR). RuvA specifically binds to HJ cruciform DNA, conferring on it an open structure. The RuvB hexamer acts as an ATP-dependent pump, pulling dsDNA into and through the RuvAB complex. RuvB forms 2 homohexamers on either side of HJ DNA bound by 1 or 2 RuvA tetramers; 4 subunits per hexamer contact DNA at a time. Coordinated motions by a converter formed by DNA-disengaged RuvB subunits stimulates ATP hydrolysis and nucleotide exchange. Immobilization of the converter enables RuvB to convert the ATP-contained energy into a lever motion, pulling 2 nucleotides of DNA out of the RuvA tetramer per ATP hydrolyzed, thus driving DNA branch migration. The RuvB motors rotate together with the DNA substrate, which together with the progressing nucleotide cycle form the mechanistic basis for DNA recombination by continuous HJ branch migration. Branch migration allows RuvC to scan DNA until it finds its consensus sequence, where it cleaves and resolves cruciform DNA. The protein is Holliday junction branch migration complex subunit RuvB of Acidothermus cellulolyticus (strain ATCC 43068 / DSM 8971 / 11B).